The following is a 657-amino-acid chain: MQWRALVLGLVLLRLGLHGVLWLVFGLGPSMGFYQRFPLSFGFQRLRSPDGPASPTSGPVGRPGGVSGPSWLQPPGTGAAQSPRKAPRRPGPGMCGPANWGYVLGGRGRGPDEYEKRYSGAFPPQLRAQMRDLARGMFVFGYDNYMAHAFPQDELNPIHCRGRGPDRGDPSNLNINDVLGNYSLTLVDALDTLAIMGNSSEFQKAVKLVINTVSFDKDSTVQVFEATIRVLGSLLSAHRIITDSKQPFGDMTIKDYDNELLYMAHDLAVRLLPAFENTKTGIPYPRVNLKTGVPPDTNNETCTAGAGSLLVEFGILSRLLGDSTFEWVARRAVKALWNLRSNDTGLLGNVVNIQTGHWVGKQSGLGAGLDSFYEYLLKSYILFGEKEDLEMFNAAYQSIQNYLRRGREACNEGEGDPPLYVNVNMFSGQLMNTWIDSLQAFFPGLQVLIGDVEDAICLHAFYYAIWKRYGALPERYNWQLQAPDVLFYPLRPELVESTYLLYQATKNPFYLHVGMDILQSLEKYTKVKCGYATLHHVIDKSTEDRMESFFLSETCKYLYLLFDEDNPVHKSGTRYMFTTEGHIVSVDEHLRELPWKEFFSEEGGQDQGGKSVHRPKPHELKVINSSSNCNRVPDERRYSLPLKSIYMRQIDQMVGLI.

Residues 1-4 (MQWR) lie on the Cytoplasmic side of the membrane. The helical; Signal-anchor for type II membrane protein transmembrane segment at 5–25 (ALVLGLVLLRLGLHGVLWLVF) threads the bilayer. Residues 26 to 657 (GLGPSMGFYQ…RQIDQMVGLI (632 aa)) lie on the Lumenal side of the membrane. A disordered region spans residues 48–94 (SPDGPASPTSGPVGRPGGVSGPSWLQPPGTGAAQSPRKAPRRPGPGM). Residues Asn-181, Asn-198, Asn-299, Asn-342, and Asn-624 are each glycosylated (N-linked (GlcNAc...) asparagine).

It belongs to the glycosyl hydrolase 47 family. As to quaternary structure, interacts with DNAJC10. Interacts with DERL2 and DERL3. Binds to SEL1L.

It localises to the endoplasmic reticulum membrane. Functionally, extracts misfolded glycoproteins, but not glycoproteins undergoing productive folding, from the calnexin cycle. It is directly involved in endoplasmic reticulum-associated degradation (ERAD) and targets misfolded glycoproteins for degradation in an N-glycan-independent manner, probably by forming a complex with SEL1L. It has low mannosidase activity, catalyzing mannose trimming from Man8GlcNAc2 to Man7GlcNAc2. The chain is ER degradation-enhancing alpha-mannosidase-like protein 1 (EDEM1) from Homo sapiens (Human).